Consider the following 296-residue polypeptide: Glycine N-acyltransferase (296 aa).

N6-acetyllysine; alternate is present on Lys-16. Lys-16 is modified (N6-succinyllysine; alternate). Lys-113 is subject to N6-acetyllysine. Lys-127, Lys-141, and Lys-142 each carry N6-acetyllysine; alternate. N6-succinyllysine; alternate occurs at positions 127, 141, and 142. N6-acetyllysine is present on residues Lys-159 and Lys-167. N6-succinyllysine is present on Lys-169. An N6-acetyllysine; alternate mark is found at Lys-183 and Lys-256. N6-succinyllysine; alternate occurs at positions 183 and 256. Position 267 is an N6-succinyllysine (Lys-267).

It belongs to the glycine N-acyltransferase family.

Its subcellular location is the mitochondrion. It catalyses the reaction an acyl-CoA + glycine = an N-acylglycine + CoA + H(+). The catalysed reaction is benzoyl-CoA + glycine = N-benzoylglycine + CoA + H(+). Mitochondrial acyltransferase which transfers an acyl group to the N-terminus of glycine and glutamine, although much less efficiently. Can conjugate a multitude of substrates to form a variety of N-acylglycines, thereby detoxify xenobiotics, such as benzoic acid or salicylic acid, and endogenous organic acids, such as isovaleric acid. The protein is Glycine N-acyltransferase (Glyat) of Mus musculus (Mouse).